The primary structure comprises 103 residues: Small ribosomal subunit protein uS10 (103 aa).

This sequence belongs to the universal ribosomal protein uS10 family. As to quaternary structure, part of the 30S ribosomal subunit.

In terms of biological role, involved in the binding of tRNA to the ribosomes. This is Small ribosomal subunit protein uS10 from Clostridioides difficile (strain 630) (Peptoclostridium difficile).